The chain runs to 458 residues: Paired box protein Pax-8 (458 aa).

A DNA-binding region (paired) is located at residues 18–144; sequence GHGGLNQLGG…SSINRIIRTK (127 aa). The tract at residues 21–77 is PAI subdomain; that stretch reads GLNQLGGAFVNGRPLPEVVRQRIVDLAHQGVRPCDISRQLRVSHGCVSKILGRYYET. The segment at 96 to 144 is RED subdomain; the sequence is KVVEKIGDYKRQNPTMFAWEIRDRLLAEGVCDNDTVPSVSSINRIIRTK. The tract at residues 198–217 is disordered; sequence PGADGKRKLDDSDQESCRLS.

It localises to the nucleus. In terms of biological role, probable transcription factor. Involved in kidney development, acting synergistically with lhx1/lim-1 to establish the pronephric primordium in late gastrulae/early neurulae. This Xenopus tropicalis (Western clawed frog) protein is Paired box protein Pax-8.